The following is a 392-amino-acid chain: Formate-dependent phosphoribosylglycinamide formyltransferase (392 aa).

Residues 22-23 and E82 contribute to the N(1)-(5-phospho-beta-D-ribosyl)glycinamide site; that span reads EL. Residues R114, K155, 160–165, 195–198, and E203 each bind ATP; these read SSGKGQ and EGLV. The region spanning 119–308 is the ATP-grasp domain; it reads RLAAETLSLP…EFALHVRAFL (190 aa). Mg(2+) is bound by residues E267 and E279. N(1)-(5-phospho-beta-D-ribosyl)glycinamide-binding positions include D286, K355, and 362-363; that span reads RR.

It belongs to the PurK/PurT family. Homodimer.

The catalysed reaction is N(1)-(5-phospho-beta-D-ribosyl)glycinamide + formate + ATP = N(2)-formyl-N(1)-(5-phospho-beta-D-ribosyl)glycinamide + ADP + phosphate + H(+). It participates in purine metabolism; IMP biosynthesis via de novo pathway; N(2)-formyl-N(1)-(5-phospho-D-ribosyl)glycinamide from N(1)-(5-phospho-D-ribosyl)glycinamide (formate route): step 1/1. Involved in the de novo purine biosynthesis. Catalyzes the transfer of formate to 5-phospho-ribosyl-glycinamide (GAR), producing 5-phospho-ribosyl-N-formylglycinamide (FGAR). Formate is provided by PurU via hydrolysis of 10-formyl-tetrahydrofolate. This is Formate-dependent phosphoribosylglycinamide formyltransferase from Sodalis glossinidius (strain morsitans).